A 510-amino-acid polypeptide reads, in one-letter code: Serine/threonine protein phosphatase 2A 59 kDa regulatory subunit B' eta isoform (510 aa).

Residues 1–87 are disordered; the sequence is MWKQILSKLP…NNNNNNNNGV (87 aa). Basic residues predominate over residues 10 to 19; it reads PNKKSSKHEH. Residues 27 to 42 are compositionally biased toward low complexity; the sequence is HSSSSSHTSGASTSKS.

Belongs to the phosphatase 2A regulatory subunit B56 family. PP2A consists of a common heteromeric enzyme, composed of a catalytic subunit (subunits C), a constant regulatory subunit (subunit A), and a variety of regulatory subunits such as subunits B (the R2/B/PR55/B55, R3/B''/PR72/PR130/PR59 and R5/B'/B56 families). Interacts with BZR1. Interacts with BRI1.

The protein localises to the nucleus. It is found in the nucleolus. The protein resides in the cytoplasm. Its function is as follows. The B regulatory subunit may modulate substrate selectivity and catalytic activity, and may also direct the localization of the catalytic enzyme to a particular subcellular compartment. The holoenzyme composed of PP2AA1, PP2A4 and B'ETA acts as negative regulator of plant innate immunity by controlling BAK1 phosphorylation state and activation in surface-localized immune receptor complexes. Required for the formation of the PP2A holoenzyme that negatively regulates brassinosteroid signaling by dephosphorylating and inactivating BRI1 in the cytoplasm. This Arabidopsis thaliana (Mouse-ear cress) protein is Serine/threonine protein phosphatase 2A 59 kDa regulatory subunit B' eta isoform (B'ETA).